The sequence spans 329 residues: Peroxidase 50 (329 aa).

Positions 1–25 (MVVVNKTNLLLLLLSLCLTLDLSSA) are cleaved as a signal peptide. 4 disulfides stabilise this stretch: Cys36/Cys119, Cys69/Cys74, Cys125/Cys325, and Cys204/Cys236. His67 (proton acceptor) is an active-site residue. 5 residues coordinate Ca(2+): Asp68, Val71, Gly73, Asp75, and Ser77. Pro167 contacts substrate. Residue His197 coordinates heme b. Thr198 lines the Ca(2+) pocket. N-linked (GlcNAc...) asparagine glycosylation occurs at Asn215. Ca(2+) contacts are provided by Asp249, Thr252, and Asp257.

It belongs to the peroxidase family. Classical plant (class III) peroxidase subfamily. The cofactor is heme b. Ca(2+) is required as a cofactor. As to expression, expressed in roots and leaves.

It is found in the secreted. The catalysed reaction is 2 a phenolic donor + H2O2 = 2 a phenolic radical donor + 2 H2O. In terms of biological role, removal of H(2)O(2), oxidation of toxic reductants, biosynthesis and degradation of lignin, suberization, auxin catabolism, response to environmental stresses such as wounding, pathogen attack and oxidative stress. These functions might be dependent on each isozyme/isoform in each plant tissue. Its function is as follows. Exhibits a Ca(2+)-pectate binding affinity which could be interpreted in vivo as a specificity to interact with the pectic structure of the cell wall. This is Peroxidase 50 (PER50) from Arabidopsis thaliana (Mouse-ear cress).